Reading from the N-terminus, the 342-residue chain is S-adenosylmethionine:tRNA ribosyltransferase-isomerase (342 aa).

Belongs to the QueA family. In terms of assembly, monomer.

Its subcellular location is the cytoplasm. The enzyme catalyses 7-aminomethyl-7-carbaguanosine(34) in tRNA + S-adenosyl-L-methionine = epoxyqueuosine(34) in tRNA + adenine + L-methionine + 2 H(+). It participates in tRNA modification; tRNA-queuosine biosynthesis. In terms of biological role, transfers and isomerizes the ribose moiety from AdoMet to the 7-aminomethyl group of 7-deazaguanine (preQ1-tRNA) to give epoxyqueuosine (oQ-tRNA). The protein is S-adenosylmethionine:tRNA ribosyltransferase-isomerase of Streptococcus agalactiae serotype V (strain ATCC BAA-611 / 2603 V/R).